A 235-amino-acid chain; its full sequence is Phosphoribosylaminoimidazole-succinocarboxamide synthase (235 aa).

Belongs to the SAICAR synthetase family.

It carries out the reaction 5-amino-1-(5-phospho-D-ribosyl)imidazole-4-carboxylate + L-aspartate + ATP = (2S)-2-[5-amino-1-(5-phospho-beta-D-ribosyl)imidazole-4-carboxamido]succinate + ADP + phosphate + 2 H(+). It participates in purine metabolism; IMP biosynthesis via de novo pathway; 5-amino-1-(5-phospho-D-ribosyl)imidazole-4-carboxamide from 5-amino-1-(5-phospho-D-ribosyl)imidazole-4-carboxylate: step 1/2. This Clostridium novyi (strain NT) protein is Phosphoribosylaminoimidazole-succinocarboxamide synthase.